Here is a 160-residue protein sequence, read N- to C-terminus: S-ribosylhomocysteine lyase (160 aa).

The Fe cation site is built by His57, His61, and Cys127.

This sequence belongs to the LuxS family. In terms of assembly, homodimer. It depends on Fe cation as a cofactor.

It catalyses the reaction S-(5-deoxy-D-ribos-5-yl)-L-homocysteine = (S)-4,5-dihydroxypentane-2,3-dione + L-homocysteine. Its function is as follows. Involved in the synthesis of autoinducer 2 (AI-2) which is secreted by bacteria and is used to communicate both the cell density and the metabolic potential of the environment. The regulation of gene expression in response to changes in cell density is called quorum sensing. Catalyzes the transformation of S-ribosylhomocysteine (RHC) to homocysteine (HC) and 4,5-dihydroxy-2,3-pentadione (DPD). The sequence is that of S-ribosylhomocysteine lyase from Streptococcus agalactiae serotype V (strain ATCC BAA-611 / 2603 V/R).